The following is a 476-amino-acid chain: Proline dehydrogenase 2, mitochondrial (476 aa).

Residues 1 to 29 (MANRFLRPNLIHRFSTVSPVGPPTTIIPE) constitute a mitochondrion transit peptide.

Belongs to the proline oxidase family. FAD is required as a cofactor. In terms of tissue distribution, expressed in the vascular tissue and in the abscission zone of petals, sepals, stamina, pistils and siliques. Not detected in petioles.

It is found in the mitochondrion. It catalyses the reaction L-proline + a quinone = (S)-1-pyrroline-5-carboxylate + a quinol + H(+). Its pathway is amino-acid degradation; L-proline degradation into L-glutamate; L-glutamate from L-proline: step 1/2. In terms of biological role, converts proline to delta-1-pyrroline-5-carboxylate. The polypeptide is Proline dehydrogenase 2, mitochondrial (POX2) (Arabidopsis thaliana (Mouse-ear cress)).